A 385-amino-acid polypeptide reads, in one-letter code: Digeranylgeranylglycerophospholipid reductase 2 (385 aa).

Alanine 13, glutamate 32, cysteine 43, alanine 44, glycine 46, arginine 95, alanine 119, aspartate 273, glycine 285, and isoleucine 286 together coordinate FAD.

Belongs to the geranylgeranyl reductase family. DGGGPL reductase subfamily. FAD serves as cofactor.

It catalyses the reaction a 2,3-bis-O-phytanyl-sn-glycerol 1-phospholipid + 8 A = a 2,3-bis-O-(geranylgeranyl)-sn-glycerol 1-phospholipid + 8 AH2. It carries out the reaction 2,3-bis-O-(phytanyl)-sn-glycerol 1-phosphate + 8 A = 2,3-bis-O-(geranylgeranyl)-sn-glycerol 1-phosphate + 8 AH2. The catalysed reaction is CDP-2,3-bis-O-(geranylgeranyl)-sn-glycerol + 8 AH2 = CDP-2,3-bis-O-(phytanyl)-sn-glycerol + 8 A. The enzyme catalyses archaetidylserine + 8 AH2 = 2,3-bis-O-phytanyl-sn-glycero-3-phospho-L-serine + 8 A. The protein operates within membrane lipid metabolism; glycerophospholipid metabolism. Its function is as follows. Is involved in the reduction of 2,3-digeranylgeranylglycerophospholipids (unsaturated archaeols) into 2,3-diphytanylglycerophospholipids (saturated archaeols) in the biosynthesis of archaeal membrane lipids. Catalyzes the formation of archaetidic acid (2,3-di-O-phytanyl-sn-glyceryl phosphate) from 2,3-di-O-geranylgeranylglyceryl phosphate (DGGGP) via the hydrogenation of each double bond of the isoprenoid chains. Is also probably able to reduce double bonds of geranyl groups in CDP-2,3-bis-O-(geranylgeranyl)-sn-glycerol and archaetidylserine, thus acting at various stages in the biosynthesis of archaeal membrane lipids. The polypeptide is Digeranylgeranylglycerophospholipid reductase 2 (Methanothermobacter thermautotrophicus (strain ATCC 29096 / DSM 1053 / JCM 10044 / NBRC 100330 / Delta H) (Methanobacterium thermoautotrophicum)).